The sequence spans 189 residues: Elongation factor P (189 aa).

The protein belongs to the elongation factor P family.

The protein resides in the cytoplasm. It participates in protein biosynthesis; polypeptide chain elongation. Functionally, involved in peptide bond synthesis. Stimulates efficient translation and peptide-bond synthesis on native or reconstituted 70S ribosomes in vitro. Probably functions indirectly by altering the affinity of the ribosome for aminoacyl-tRNA, thus increasing their reactivity as acceptors for peptidyl transferase. The polypeptide is Elongation factor P (Sinorhizobium fredii (strain NBRC 101917 / NGR234)).